The primary structure comprises 62 residues: Cryptic Mu-phage protein com (62 aa).

It belongs to the com family.

The protein is Cryptic Mu-phage protein com of Shigella dysenteriae.